The following is an 853-amino-acid chain: MEEDDNLKKGNERNKKKAIFSNDDFTGEDSLMEDHLELREKLSEDIDMIKTSLKNNLVCSTLNDNEILTLSNYMQFFVFKSGNLVIKQGEKGSYFFIINSGKFDVYVNDKKVKTMGKGSSFGEAALIHNTQRSATIIAETDGTLWGVQRSTFRATLKQLSNRNFNENRTFIDSVSVFDMLTEAQKNMITNACVIQNFKSGETIVKQGDYGDVLYILKEGKATVYINDEEIRVLEKGSYFGERALLYDEPRSATIIAKEPTACASICRKLLNIVLGNLQVVLFRNIMTEALQQSEIFKQFSGDQLNDLADTAIVRDYPANYNILHKDKVKSVKYIIVLEGKVELFLDDTSIGILSRGMSFGDQYVLNQKQPFKHTIKSLEVCKIALITETCLADCLGNNNIDASIDYNNKKSIIKKMYIFRYLTDKQCNLLIEAFRTTRYEEGDYIIQEGEVGSRFYIIKNGEVEIVKNKKRLRTLGKNDYFGERALLYDEPRTASVISKVNNVECWFVDKSVFLQIIQGPMLAHLEERIKMQDTKVEMDELETERIIGRGTFGTVKLVHHKPTKIRYALKCVSKRSIINLNQQNNIKLEREITAENDHPFIIRLVRTFKDSKYFYFLTELVTGGELYDAIRKLGLLSKSQAQFYLGSIILAIEYLHERNIVYRDLKPENILLDKQGYVKLIDFGCAKKVQGRAYTLVGTPHYMAPEVILGKGYGCTVDIWALGICLYEFICGPLPFGNDEEDQLEIFRDILTGQLTFPDYVTDTDSINLMKRLLCRLPQGRIGCSINGFKDIKDHPFFSNFNWDKLAGRLLDPPLVSKSETYAEDIDIKQIEEEDAEDDEEPLNDEDNWDIDF.

Positions 1 to 29 are autoinhibitory segment; it reads MEEDDNLKKGNERNKKKAIFSNDDFTGED. CNMP-binding domain regions lie at residues 58-173, 176-275, 295-398, and 418-517; these read VCST…FIDS, VFDM…IVLG, IFKQ…LGNN, and IFRY…LQII. 3',5'-cyclic GMP-binding residues include K113, G122, E123, A125, R132, and S133. 6 residues coordinate 3',5'-cyclic GMP: R473, G482, E483, A485, R492, and T493. The region spanning 541–798 is the Protein kinase domain; that stretch reads LETERIIGRG…FKDIKDHPFF (258 aa). ATP contacts are provided by residues 547-555 and K570; that span reads IGRGTFGTV. The active-site Proton acceptor is the D664. Residues 799–853 enclose the AGC-kinase C-terminal domain; that stretch reads SNFNWDKLAGRLLDPPLVSKSETYAEDIDIKQIEEEDAEDDEEPLNDEDNWDIDF. The disordered stretch occupies residues 827-853; that stretch reads DIKQIEEEDAEDDEEPLNDEDNWDIDF. Acidic residues predominate over residues 832–853; the sequence is EEEDAEDDEEPLNDEDNWDIDF.

Belongs to the protein kinase superfamily. AGC Ser/Thr protein kinase family. cGMP subfamily. As to quaternary structure, monomer. Requires Mg(2+) as cofactor. In terms of processing, autophosphorylated.

It is found in the cytoplasm. The protein resides in the endoplasmic reticulum membrane. It carries out the reaction L-seryl-[protein] + ATP = O-phospho-L-seryl-[protein] + ADP + H(+). The enzyme catalyses L-threonyl-[protein] + ATP = O-phospho-L-threonyl-[protein] + ADP + H(+). Its activity is regulated as follows. Activated by cGMP. Not activated by cAMP. cGMP binding allosterically triggers a conformational change at the alpha C-helix of cGMP-binding domain 4, which bridges the regulatory and catalytic domains, causing the capping triad, composed of Arg-484, Gln-532 and Asp-533, to form and stabilize the active conformation. The cGMP-binding domains acts cooperatively to activate PKG. In terms of biological role, serine/threonine protein kinase which acts as a downstream effector of the second messenger cGMP. Controls the release of Ca(2+) from intracellular stores by regulating phosphoinositide biosynthesis. Ca(2+) signals are essential for merozoite and sporozoite invasion and egress from host hepatocytes and erythrocytes, and, in the mosquito vector, for gametocyte activation, and ookinete and sporozoite motility. During the host liver stage, regulates the initial invasion of host hepatocytes by sporozoites by regulating sporozoite motility and microneme exocytosis. Following parasite development in the hepatocytes, required for the release of merosomes, a vesicle containing the mature merozoites. During the asexual blood stage, required for the progression from schizont to the ring stage following merozoite invasion of host erythrocytes and for merozoite egress. Regulates merozoite egress by promoting the release of exonemes and micronemes which contain proteins essential for egress. Phosphorylates CDPK1 predominantly at the late schizont stage; phosphorylation at 'Ser-64' regulates CDPK1 protein-protein interaction and phosphorylation at 'Thr-231' may regulate CDPK1 kinase activity. In the mosquito vector, required for the initiation of gametogenesis induced by xanthurenic acid, specifically the gametocyte differentiation from the crescent-shaped form to the spherical form. Required for the gliding motility of ookinetes to reach and penetrate the midgut epithelium by promoting Ca(2+)-mediated activation of CDPK1 and CDPK4. Also required for microneme secretion in ookinete by promoting Ca(2+)-mediated activation of CDPK3. This is cGMP-dependent protein kinase from Plasmodium falciparum (isolate NF54).